We begin with the raw amino-acid sequence, 614 residues long: V-type proton ATPase catalytic subunit A (614 aa).

Residue 247–254 coordinates ATP; it reads GAFGCGKT.

It belongs to the ATPase alpha/beta chains family. In terms of assembly, V-ATPase is a heteromultimeric enzyme made up of two complexes: the ATP-hydrolytic V1 complex and the proton translocation V0 complex. The V1 complex consists of three catalytic AB heterodimers that form a heterohexamer, three peripheral stalks each consisting of EG heterodimers, one central rotor including subunits D and F, and the regulatory subunits C and H. The proton translocation complex V0 consists of the proton transport subunit a, a ring of proteolipid subunits c9c'', rotary subunit d, subunits e and f, and the accessory subunits VhaAC45 and ATP6AP2.

It catalyses the reaction ATP + H2O + 4 H(+)(in) = ADP + phosphate + 5 H(+)(out). Its activity is regulated as follows. ATP hydrolysis occurs at the interface between the nucleotide-binding domains of subunits A and B. ATP hydrolysis triggers a conformational change in the subunits D and F, which induces a shift of subunit d. The c-ring is subsequently rotated and results in a continuous proton translocation across the membrane. Functionally, catalytic subunit of the V1 complex of vacuolar(H+)-ATPase (V-ATPase), a multisubunit enzyme composed of a peripheral complex (V1) that hydrolyzes ATP and a membrane integral complex (V0) that translocates protons. V-ATPase is responsible for acidifying and maintaining the pH of intracellular compartments and in some cell types, is targeted to the plasma membrane, where it is responsible for acidifying the extracellular environment. This is V-type proton ATPase catalytic subunit A from Anopheles gambiae (African malaria mosquito).